We begin with the raw amino-acid sequence, 520 residues long: Aldehyde dehydrogenase 5, mitochondrial (520 aa).

The N-terminal 23 residues, 1–23 (MLSRTRAAAPNSRIFTRSLLRLY), are a transit peptide targeting the mitochondrion. Position 266–271 (266–271 (GSTATG)) interacts with NAD(+). Residue Glu-288 is the Proton acceptor of the active site. The active-site Nucleophile is the Cys-322.

It belongs to the aldehyde dehydrogenase family.

The protein localises to the mitochondrion matrix. It catalyses the reaction an aldehyde + NADP(+) + H2O = a carboxylate + NADPH + 2 H(+). It carries out the reaction an aldehyde + NAD(+) + H2O = a carboxylate + NADH + 2 H(+). It participates in alcohol metabolism; ethanol degradation; acetate from ethanol: step 2/2. Induced by potassium ions. Minor mitochondrial aldehyde dehydrogenase isoform. Plays a role in regulation or biosynthesis of electron transport chain components. Involved in the biosynthesis of acetate during anaerobic growth on glucose. The sequence is that of Aldehyde dehydrogenase 5, mitochondrial (ALD5) from Saccharomyces cerevisiae (strain YJM789) (Baker's yeast).